The following is a 49-amino-acid chain: MKRTYQPHNTRRARTHGFRARMATAGGRKVINNRRRKGRARLAPTIYKK.

This sequence belongs to the bacterial ribosomal protein bL34 family.

The sequence is that of Large ribosomal subunit protein bL34 from Sorangium cellulosum (strain So ce56) (Polyangium cellulosum (strain So ce56)).